A 199-amino-acid polypeptide reads, in one-letter code: Glycerol-3-phosphate acyltransferase (199 aa).

5 helical membrane passes run 5-25 (AFLVLTYLLGAFPFGLVVALV), 51-71 (KLGVLTLVLDLAKGLVPVLCA), 79-99 (VFLSMVAVAAVVGHMYSVFLY), 112-132 (VFLGGAPIPALLSVAVCVAVI), and 153-173 (CAWLGPVFLVPAAAIIGGLVI).

This sequence belongs to the PlsY family. As to quaternary structure, probably interacts with PlsX.

The protein resides in the cell inner membrane. The catalysed reaction is an acyl phosphate + sn-glycerol 3-phosphate = a 1-acyl-sn-glycero-3-phosphate + phosphate. Its pathway is lipid metabolism; phospholipid metabolism. Its function is as follows. Catalyzes the transfer of an acyl group from acyl-phosphate (acyl-PO(4)) to glycerol-3-phosphate (G3P) to form lysophosphatidic acid (LPA). This enzyme utilizes acyl-phosphate as fatty acyl donor, but not acyl-CoA or acyl-ACP. The protein is Glycerol-3-phosphate acyltransferase of Solidesulfovibrio magneticus (strain ATCC 700980 / DSM 13731 / RS-1) (Desulfovibrio magneticus).